A 369-amino-acid polypeptide reads, in one-letter code: 4-hydroxy-3-methylbut-2-en-1-yl diphosphate synthase (flavodoxin) (369 aa).

[4Fe-4S] cluster contacts are provided by C268, C271, C303, and E310.

This sequence belongs to the IspG family. Requires [4Fe-4S] cluster as cofactor.

It carries out the reaction (2E)-4-hydroxy-3-methylbut-2-enyl diphosphate + oxidized [flavodoxin] + H2O + 2 H(+) = 2-C-methyl-D-erythritol 2,4-cyclic diphosphate + reduced [flavodoxin]. The protein operates within isoprenoid biosynthesis; isopentenyl diphosphate biosynthesis via DXP pathway; isopentenyl diphosphate from 1-deoxy-D-xylulose 5-phosphate: step 5/6. In terms of biological role, converts 2C-methyl-D-erythritol 2,4-cyclodiphosphate (ME-2,4cPP) into 1-hydroxy-2-methyl-2-(E)-butenyl 4-diphosphate. This Exiguobacterium sibiricum (strain DSM 17290 / CCUG 55495 / CIP 109462 / JCM 13490 / 255-15) protein is 4-hydroxy-3-methylbut-2-en-1-yl diphosphate synthase (flavodoxin).